The sequence spans 5054 residues: Malformin synthetase mlfA (5054 aa).

Positions 194-585 (ERRAANRPHS…CGRADTQVKL (392 aa)) are adenylation 1. The 77-residue stretch at 723–799 (LGLSQLEQEI…EASSLAEVQE (77 aa)) folds into the Carrier 1 domain. Serine 760 carries the O-(pantetheine 4'-phosphoryl)serine modification. The tract at residues 837–1268 (EDVFPCTTMQ…ALNTLTLLQA (432 aa)) is condensation 1. Residues 1296–1685 (DRWVTRQPES…GRKDTQVKLR (390 aa)) form an adenylation 2 region. One can recognise a Carrier 2 domain in the interval 1823 to 1900 (TASSKLELTL…QLAAILGEAT (78 aa)). The residue at position 1860 (serine 1860) is an O-(pantetheine 4'-phosphoryl)serine. 2 disordered regions span residues 1899-1929 (ATGQ…NDGV) and 1964-1994 (GSSS…VSPV). Composition is skewed to low complexity over residues 1904 to 1927 (ESSA…STND) and 1965 to 1981 (SSSC…SSSS). The condensation 2 stretch occupies residues 2033–2448 (EDIYPATALQ…GVSYRDKQTL (416 aa)). The interval 2471–2863 (VRTPHAPAVF…IGRRDGQLKL (393 aa)) is adenylation 3. A Carrier 3 domain is found at 2999–3075 (RPATAQEREM…QLMRHLSANG (77 aa)). Serine 3036 carries the O-(pantetheine 4'-phosphoryl)serine modification. Condensation stretches follow at residues 3092–3557 (WVPL…TYDQ) and 3578–3997 (DIYP…EQLV). An adenylation 4 region spans residues 4022 to 4412 (HSSREAACAW…VGRKDNQIKF (391 aa)). Residues 4546–4622 (MPFTAAECKM…DLAYRTANLV (77 aa)) enclose the Carrier 4 domain. Serine 4583 carries the post-translational modification O-(pantetheine 4'-phosphoryl)serine. The segment at 4659–4972 (EVLPTTSFQR…LQTIVQHQNN (314 aa)) is condensation 5.

The protein belongs to the NRP synthetase family.

It participates in secondary metabolite biosynthesis. Functionally, nonribosomal peptide synthetase; part of the gene cluster that mediates the biosynthesis of malformins, cyclic pentapeptides with a disulfide bond between 2 consecutive cysteins, that show potential anti-tumor as well as antimalarial and antitrypanosomal properties. The nonribosomal peptide synthetase mlfA is responsible of the formation of the cyclic pentapeptide. The malformin biosynthesis clusters in malformin-producing fungi also contain enzymes involved in the formation of the disulfide bond between the two consecutive cysteins within malformins, in addition to additional tailoring enzymes such as methyltransferases or oxidoreductases. They are also composed of up to 4 major facilitator superfamily transporters, and transcription factors probably involved in the regulation of the expression of those clusters. This is Malformin synthetase mlfA from Aspergillus niger (strain ATCC MYA-4892 / CBS 513.88 / FGSC A1513).